We begin with the raw amino-acid sequence, 33 residues long: Beta-theraphotoxin-Cm1a (33 aa).

3 cysteine pairs are disulfide-bonded: C2–C17, C9–C22, and C16–C29. L33 is modified (leucine amide).

Belongs to the neurotoxin 10 (Hwtx-1) family. 04 (CcoTx1) subfamily. As to expression, expressed by the venom gland.

The protein resides in the secreted. Functionally, inhibits many voltage-gated sodium channels and one voltage-gated calcium channel (Cav2.2/CACNA1B (IC(50)=400 nM), Nav1.2/SCN2A (IC(50)=3-70 nM), Nav1.1/SCN1A (IC(50)=523-1060 nM), Nav1.7/SCN9A (IC(50)=129.1-5120 nM), Nav1.4/SCN4A (IC(50)=263-888 nM or &gt;10 uM) and Nav1.5/SCN5A (IC(50)=188-323 nM or &gt;10 uM)). It acts by shifting the voltage dependence of channel activation to more depolarized potentials and by blocking the inward component of the sodium current. It shows moderate affinity for lipid bilayers. On Nav1.7/SCN9A, it has been shown to interact with the S3-S4 loop of domain DII (site 4). Is significantly more potent against Nav1.2/SCN2A than the other Nav channel subtypes. In vivo, this toxin causes general ataxia, lack of response to stimuli, and semiparalysis. After a few minutes, the mice are unable to stand, and breathing is reduced in rhythm and intensity. Symptoms gradually increase with progressive slowing of breathing and flaccid paralysis, death occurred within 10 to 20 minutes post injection. Animals remain totally flaccid, and no symptoms of excitatory neurotoxicity are observed. This chain is Beta-theraphotoxin-Cm1a, found in Ceratogyrus marshalli (Straighthorned baboon tarantula).